A 142-amino-acid polypeptide reads, in one-letter code: Large ribosomal subunit protein uL22c (142 aa).

This sequence belongs to the universal ribosomal protein uL22 family. In terms of assembly, part of the 50S ribosomal subunit.

It localises to the plastid. The protein localises to the chloroplast. In terms of biological role, this protein binds specifically to 23S rRNA. The globular domain of the protein is located near the polypeptide exit tunnel on the outside of the subunit, while an extended beta-hairpin is found that lines the wall of the exit tunnel in the center of the 70S ribosome. This Ceratophyllum demersum (Rigid hornwort) protein is Large ribosomal subunit protein uL22c (rpl22).